Consider the following 122-residue polypeptide: Large ribosomal subunit protein uL14 (122 aa).

This sequence belongs to the universal ribosomal protein uL14 family. As to quaternary structure, part of the 50S ribosomal subunit. Forms a cluster with proteins L3 and L19. In the 70S ribosome, L14 and L19 interact and together make contacts with the 16S rRNA in bridges B5 and B8.

Its function is as follows. Binds to 23S rRNA. Forms part of two intersubunit bridges in the 70S ribosome. The sequence is that of Large ribosomal subunit protein uL14 from Chlorobaculum tepidum (strain ATCC 49652 / DSM 12025 / NBRC 103806 / TLS) (Chlorobium tepidum).